The primary structure comprises 161 residues: MDDKIKNYNNLPYRIGVGMVIINQKKEIFTGQRIDSARQYWQMPQGGIILGETYSKAVLREMKEEIGCNKAIIMAESRNWYSYHIPKFLVHKLWNSNFKGQKQKWFLIKFLGKDEDININTIYPEFSQWKWMNSNQLINNALPFKRKLYKAVINEFHIFLL.

Residues 12 to 154 form the Nudix hydrolase domain; the sequence is PYRIGVGMVI…KRKLYKAVIN (143 aa). The short motif at 46 to 67 is the Nudix box element; the sequence is GGIILGETYSKAVLREMKEEIG.

The protein belongs to the Nudix hydrolase family. RppH subfamily. Requires a divalent metal cation as cofactor.

In terms of biological role, accelerates the degradation of transcripts by removing pyrophosphate from the 5'-end of triphosphorylated RNA, leading to a more labile monophosphorylated state that can stimulate subsequent ribonuclease cleavage. In Orientia tsutsugamushi (strain Boryong) (Rickettsia tsutsugamushi), this protein is RNA pyrophosphohydrolase.